A 144-amino-acid polypeptide reads, in one-letter code: Bacilliredoxin SSP1311 (144 aa).

This sequence belongs to the bacilliredoxin family.

In Staphylococcus saprophyticus subsp. saprophyticus (strain ATCC 15305 / DSM 20229 / NCIMB 8711 / NCTC 7292 / S-41), this protein is Bacilliredoxin SSP1311.